A 932-amino-acid polypeptide reads, in one-letter code: UPF0182 protein Amet_0022 (932 aa).

The next 7 membrane-spanning stretches (helical) occupy residues 14–34, 60–80, 104–124, 166–186, 208–228, 256–276, and 286–306; these read VIIG…SEIL, LQIG…YLIG, ILIL…AGSL, TSIL…MFLI, LLQI…LVLA, VTLW…TGVV, and LLLI…VISL.

This sequence belongs to the UPF0182 family.

The protein resides in the cell membrane. The chain is UPF0182 protein Amet_0022 from Alkaliphilus metalliredigens (strain QYMF).